Reading from the N-terminus, the 368-residue chain is Probable pectate lyase 4 (368 aa).

Residues 1–25 form the signal peptide; that stretch reads MASLVVIVSLLLAAFASPLLETAHS. N-linked (GlcNAc...) asparagine glycosylation is present at N27. Residues D167, D191, and D195 each coordinate Ca(2+). R247 is an active-site residue.

This sequence belongs to the polysaccharide lyase 1 family. Requires Ca(2+) as cofactor.

The catalysed reaction is Eliminative cleavage of (1-&gt;4)-alpha-D-galacturonan to give oligosaccharides with 4-deoxy-alpha-D-galact-4-enuronosyl groups at their non-reducing ends.. Its pathway is glycan metabolism; pectin degradation; 2-dehydro-3-deoxy-D-gluconate from pectin: step 2/5. The sequence is that of Probable pectate lyase 4 from Arabidopsis thaliana (Mouse-ear cress).